The chain runs to 217 residues: UPF0502 protein VF_A0604 (217 aa).

This sequence belongs to the UPF0502 family.

This chain is UPF0502 protein VF_A0604, found in Aliivibrio fischeri (strain ATCC 700601 / ES114) (Vibrio fischeri).